Here is a 194-residue protein sequence, read N- to C-terminus: HTH-type transcriptional regulator BetI (194 aa).

Residues 8–68 (EIRRAQLIDA…ATMRHVLRDL (61 aa)) form the HTH tetR-type domain. The segment at residues 31-50 (TLASVAQRANISTGIVSHYF) is a DNA-binding region (H-T-H motif).

The protein operates within amine and polyamine biosynthesis; betaine biosynthesis via choline pathway [regulation]. Its function is as follows. Repressor involved in the biosynthesis of the osmoprotectant glycine betaine. It represses transcription of the choline transporter BetT and the genes of BetAB involved in the synthesis of glycine betaine. The protein is HTH-type transcriptional regulator BetI of Burkholderia lata (strain ATCC 17760 / DSM 23089 / LMG 22485 / NCIMB 9086 / R18194 / 383).